Reading from the N-terminus, the 286-residue chain is Pyridoxal kinase PdxY (286 aa).

Substrate-binding positions include Ser9 and 44 to 45; that span reads TQ. Residues Asp111, Glu148, and Lys181 each contribute to the ATP site. Asp222 is a binding site for substrate.

It belongs to the pyridoxine kinase family. PdxY subfamily. In terms of assembly, homodimer. Mg(2+) serves as cofactor.

It catalyses the reaction pyridoxal + ATP = pyridoxal 5'-phosphate + ADP + H(+). It participates in cofactor metabolism; pyridoxal 5'-phosphate salvage; pyridoxal 5'-phosphate from pyridoxal: step 1/1. Functionally, pyridoxal kinase involved in the salvage pathway of pyridoxal 5'-phosphate (PLP). Catalyzes the phosphorylation of pyridoxal to PLP. The protein is Pyridoxal kinase PdxY of Pasteurella multocida (strain Pm70).